Here is a 165-residue protein sequence, read N- to C-terminus: Nucleotide-binding protein LBF_1338 (165 aa).

The protein belongs to the YajQ family.

Functionally, nucleotide-binding protein. In Leptospira biflexa serovar Patoc (strain Patoc 1 / Ames), this protein is Nucleotide-binding protein LBF_1338.